Consider the following 315-residue polypeptide: Olfactory receptor 2V1 (315 aa).

The next 7 membrane-spanning stretches (helical) occupy residues 31–51 (TVML…LLIY), 59–79 (PMYF…CNIV), 100–120 (IQIG…GLMA), 145–165 (IAGS…VAAM), 196–216 (FDTL…SIIV), 239–259 (LATC…AMFI), and 273–293 (KVVS…IYSL). The cysteines at positions 98 and 180 are disulfide-linked.

Belongs to the G-protein coupled receptor 1 family.

It localises to the cell membrane. In terms of biological role, odorant receptor. Activated by (+) and (-)-limonene. In Mus musculus (Mouse), this protein is Olfactory receptor 2V1.